The chain runs to 233 residues: MTTLSCKVTSVEAITDTVYRVRLVPDAAFSFRAGQYLMVVMDERDKRPFSMASTPDEKGFIELHIGASELNLYAMAVMDRILKDREIVVDIPHGDAWLRDDEERPLILIAGGTGFSYVRSILLTALARNPARDVTIYWGGREEKHLYDLSELEALSVNHPNLRIEPVVEQPEEGWRGRTGTVLTAVLQDYGTLAGHDIYIAGRFEMAKIARDLFCHERNAREDRLFGDAFAFI.

The 118-residue stretch at 2–119 folds into the FAD-binding FR-type domain; it reads TTLSCKVTSV…AGGTGFSYVR (118 aa). Position 111–115 (111–115) interacts with pyridine; the sequence is GGTGF.

Belongs to the Fre/LuxG FAD/NAD(P) flavoprotein oxidoreductase family. As to quaternary structure, monomer.

It carries out the reaction reduced riboflavin + NADP(+) = riboflavin + NADPH + 2 H(+). The catalysed reaction is reduced riboflavin + NAD(+) = riboflavin + NADH + 2 H(+). Functionally, catalyzes the reduction of soluble flavins by reduced pyridine nucleotides. This Salmonella typhimurium (strain LT2 / SGSC1412 / ATCC 700720) protein is NAD(P)H-flavin reductase (fre).